Reading from the N-terminus, the 73-residue chain is Conotoxin Cl9.2 (73 aa).

The signal sequence occupies residues 1–18 (MSKLVILAVLVLLPLVTA). Positions 19-41 (EHGRDEQAMQPEKKTMWTLWSLT) are excised as a propeptide. 3 disulfide bridges follow: Cys-46–Cys-61, Cys-52–Cys-63, and Cys-58–Cys-72.

In terms of tissue distribution, expressed by the venom duct.

Its subcellular location is the secreted. The polypeptide is Conotoxin Cl9.2 (Californiconus californicus (California cone)).